A 154-amino-acid chain; its full sequence is Protein phosphatase 1 regulatory subunit 27 (154 aa).

ANK repeat units follow at residues 63–92 and 96–125; these read SGLA…DIHQ and TGWT…DRDA.

Interacts with DYSF and PPP1CA.

Functionally, inhibits phosphatase activity of protein phosphatase 1 (PP1) complexes. This chain is Protein phosphatase 1 regulatory subunit 27 (Ppp1r27), found in Mus musculus (Mouse).